Reading from the N-terminus, the 385-residue chain is tRNA-specific 2-thiouridylase MnmA (385 aa).

Residues 29 to 36 (GLSGGVDS) and Leu55 each bind ATP. Cys116 serves as the catalytic Nucleophile. Residues Cys116 and Cys225 are joined by a disulfide bond. Gly141 lines the ATP pocket. The interval 175–177 (KDQ) is interaction with tRNA. Cys225 (cysteine persulfide intermediate) is an active-site residue. Positions 330–331 (RY) are interaction with tRNA.

It belongs to the MnmA/TRMU family.

Its subcellular location is the cytoplasm. It catalyses the reaction S-sulfanyl-L-cysteinyl-[protein] + uridine(34) in tRNA + AH2 + ATP = 2-thiouridine(34) in tRNA + L-cysteinyl-[protein] + A + AMP + diphosphate + H(+). In terms of biological role, catalyzes the 2-thiolation of uridine at the wobble position (U34) of tRNA, leading to the formation of s(2)U34. In Prochlorococcus marinus (strain AS9601), this protein is tRNA-specific 2-thiouridylase MnmA.